Consider the following 232-residue polypeptide: Ubiquinone biosynthesis O-methyltransferase (232 aa).

Residues Arg36, Gly55, Asp76, and Leu120 each coordinate S-adenosyl-L-methionine.

Belongs to the methyltransferase superfamily. UbiG/COQ3 family.

It catalyses the reaction a 3-demethylubiquinol + S-adenosyl-L-methionine = a ubiquinol + S-adenosyl-L-homocysteine + H(+). It carries out the reaction a 3-(all-trans-polyprenyl)benzene-1,2-diol + S-adenosyl-L-methionine = a 2-methoxy-6-(all-trans-polyprenyl)phenol + S-adenosyl-L-homocysteine + H(+). The protein operates within cofactor biosynthesis; ubiquinone biosynthesis. Its function is as follows. O-methyltransferase that catalyzes the 2 O-methylation steps in the ubiquinone biosynthetic pathway. In Pseudomonas putida (strain ATCC 700007 / DSM 6899 / JCM 31910 / BCRC 17059 / LMG 24140 / F1), this protein is Ubiquinone biosynthesis O-methyltransferase.